The chain runs to 361 residues: Peptide chain release factor 1 (361 aa).

Position 237 is an N5-methylglutamine (Gln-237). A compositionally biased stretch (basic and acidic residues) spans 287 to 297 (KQQKEQSDTRK). The interval 287-307 (KQQKEQSDTRKNLVGSGDRSE) is disordered.

It belongs to the prokaryotic/mitochondrial release factor family. Methylated by PrmC. Methylation increases the termination efficiency of RF1.

It localises to the cytoplasm. Its function is as follows. Peptide chain release factor 1 directs the termination of translation in response to the peptide chain termination codons UAG and UAA. The polypeptide is Peptide chain release factor 1 (Francisella philomiragia subsp. philomiragia (strain ATCC 25017 / CCUG 19701 / FSC 153 / O#319-036)).